The following is a 426-amino-acid chain: Glutamate-1-semialdehyde 2,1-aminomutase (426 aa).

Lys265 bears the N6-(pyridoxal phosphate)lysine mark.

This sequence belongs to the class-III pyridoxal-phosphate-dependent aminotransferase family. HemL subfamily. In terms of assembly, homodimer. Pyridoxal 5'-phosphate serves as cofactor.

The protein resides in the cytoplasm. It catalyses the reaction (S)-4-amino-5-oxopentanoate = 5-aminolevulinate. Its pathway is porphyrin-containing compound metabolism; protoporphyrin-IX biosynthesis; 5-aminolevulinate from L-glutamyl-tRNA(Glu): step 2/2. The polypeptide is Glutamate-1-semialdehyde 2,1-aminomutase (Aliarcobacter butzleri (strain RM4018) (Arcobacter butzleri)).